The chain runs to 347 residues: GMP reductase (347 aa).

108-131 is an NADP(+) binding site; it reads ADFEKTKQILDLNPALNFVCIDVA. Residues glycine 181 and glycine 183 each coordinate K(+). Cysteine 186 functions as the Thioimidate intermediate in the catalytic mechanism. Residue 216 to 239 participates in NADP(+) binding; it reads IVSDGGCTTPGDVAKAFGGGADFV.

The protein belongs to the IMPDH/GMPR family. GuaC type 1 subfamily. As to quaternary structure, homotetramer.

It catalyses the reaction IMP + NH4(+) + NADP(+) = GMP + NADPH + 2 H(+). Catalyzes the irreversible NADPH-dependent deamination of GMP to IMP. It functions in the conversion of nucleobase, nucleoside and nucleotide derivatives of G to A nucleotides, and in maintaining the intracellular balance of A and G nucleotides. The sequence is that of GMP reductase from Escherichia coli O127:H6 (strain E2348/69 / EPEC).